We begin with the raw amino-acid sequence, 209 residues long: Large ribosomal subunit protein uL3 (209 aa).

The tract at residues 133 to 153 (THGNSLSHRAPGSIGQNQTPG) is disordered. Gln150 bears the N5-methylglutamine mark.

Belongs to the universal ribosomal protein uL3 family. Part of the 50S ribosomal subunit. Forms a cluster with proteins L14 and L19. Post-translationally, methylated by PrmB.

Its function is as follows. One of the primary rRNA binding proteins, it binds directly near the 3'-end of the 23S rRNA, where it nucleates assembly of the 50S subunit. The sequence is that of Large ribosomal subunit protein uL3 from Pectobacterium atrosepticum (strain SCRI 1043 / ATCC BAA-672) (Erwinia carotovora subsp. atroseptica).